The sequence spans 96 residues: Protein Vpr (96 aa).

A homooligomerization region spans residues 1–42; it reads MEQAPEDQGPQREPNNEWTLEILEELKREAVRHFPRPWLHNL. A phosphoserine; by host mark is found at S79, S94, and S96.

It belongs to the HIV-1 VPR protein family. In terms of assembly, homooligomer, may form homodimer. Interacts with p6-gag region of the Pr55 Gag precursor protein through a (Leu-X-X)4 motif near the C-terminus of the P6gag protein. Interacts with host UNG. May interact with host RAD23A/HHR23A. Interacts with host VPRBP/DCAF1, leading to hijack the CUL4A-RBX1-DDB1-DCAF1/VPRBP complex, mediating ubiquitination of host proteins such as TERT and ZGPAT and arrest of the cell cycle in G2 phase. In terms of processing, phosphorylated on several residues by host. These phosphorylations regulate VPR activity for the nuclear import of the HIV-1 pre-integration complex.

Its subcellular location is the virion. It is found in the host nucleus. The protein localises to the host extracellular space. During virus replication, may deplete host UNG protein, and incude G2-M cell cycle arrest. Acts by targeting specific host proteins for degradation by the 26S proteasome, through association with the cellular CUL4A-DDB1 E3 ligase complex by direct interaction with host VPRPB/DCAF-1. Cell cycle arrest reportedly occurs within hours of infection and is not blocked by antiviral agents, suggesting that it is initiated by the VPR carried into the virion. Additionally, VPR induces apoptosis in a cell cycle dependent manner suggesting that these two effects are mechanistically linked. Detected in the serum and cerebrospinal fluid of AIDS patient, VPR may also induce cell death to bystander cells. Its function is as follows. During virus entry, plays a role in the transport of the viral pre-integration (PIC) complex to the host nucleus. This function is crucial for viral infection of non-dividing macrophages. May act directly at the nuclear pore complex, by binding nucleoporins phenylalanine-glycine (FG)-repeat regions. The polypeptide is Protein Vpr (Human immunodeficiency virus type 1 group M subtype K (isolate 96CM-MP535) (HIV-1)).